The primary structure comprises 1962 residues: Myosin heavy chain, muscle (1962 aa).

Positions 33–82 (DSKKSCWIPDEKEGYLLGEIKATKGDIVSVGLQGGEVRDIKSEKVEKVNP) constitute a Myosin N-terminal SH3-like domain. The Myosin motor domain occupies 86–777 (EKIEDMADMT…VLGQMEEFRD (692 aa)). Residue 179-186 (GESGAGKT) coordinates ATP. The interval 656–678 (LNSLMTTLRSTQPHFVRCIIPNE) is actin-binding. The IQ domain occupies 780–809 (LGKIMSWMQAWARGYLSRKGFKKLQEQRVA). Positions 802–1927 (KLQEQRVALK…KFRAKGRAGS (1126 aa)) form a coiled coil. 2 disordered regions span residues 1822–1862 (ENEL…NHER) and 1922–1962 (KGRA…ENEF).

The protein belongs to the TRAFAC class myosin-kinesin ATPase superfamily. Myosin family. Muscle myosin is a hexameric protein that consists of 2 heavy chain subunits (MHC), 2 alkali light chain subunits (MLC) and 2 regulatory light chain subunits (MLC-2). Expressed in larval and adult muscles. Isoforms containing exon 9a are expressed in indirect flight muscles, exons 9a and 9b are expressed in jump muscles, exons 9b and 9c are expressed in other larval and adult muscles.

The protein resides in the cytoplasm. It is found in the myofibril. Its function is as follows. Muscle contraction. This chain is Myosin heavy chain, muscle (Mhc), found in Drosophila melanogaster (Fruit fly).